The sequence spans 169 residues: GTP-dependent dephospho-CoA kinase (169 aa).

GTP is bound by residues Asp-45, Asp-64, and Glu-121.

The protein belongs to the GTP-dependent DPCK family.

The catalysed reaction is 3'-dephospho-CoA + GTP = GDP + CoA + H(+). It functions in the pathway cofactor biosynthesis; coenzyme A biosynthesis. Catalyzes the GTP-dependent phosphorylation of the 3'-hydroxyl group of dephosphocoenzyme A to form coenzyme A (CoA). In Methanobrevibacter smithii (strain ATCC 35061 / DSM 861 / OCM 144 / PS), this protein is GTP-dependent dephospho-CoA kinase.